The primary structure comprises 443 residues: Probable D-serine dehydratase (443 aa).

Lysine 118 bears the N6-(pyridoxal phosphate)lysine mark.

Belongs to the serine/threonine dehydratase family. DsdA subfamily. Requires pyridoxal 5'-phosphate as cofactor.

It carries out the reaction D-serine = pyruvate + NH4(+). In Colwellia psychrerythraea (strain 34H / ATCC BAA-681) (Vibrio psychroerythus), this protein is Probable D-serine dehydratase.